We begin with the raw amino-acid sequence, 483 residues long: ATP synthase subunit beta (483 aa).

169–176 (GGAGVGKT) lines the ATP pocket.

Belongs to the ATPase alpha/beta chains family. As to quaternary structure, F-type ATPases have 2 components, CF(1) - the catalytic core - and CF(0) - the membrane proton channel. CF(1) has five subunits: alpha(3), beta(3), gamma(1), delta(1), epsilon(1). CF(0) has three main subunits: a(1), b(2) and c(9-12). The alpha and beta chains form an alternating ring which encloses part of the gamma chain. CF(1) is attached to CF(0) by a central stalk formed by the gamma and epsilon chains, while a peripheral stalk is formed by the delta and b chains.

The protein resides in the cell membrane. The catalysed reaction is ATP + H2O + 4 H(+)(in) = ADP + phosphate + 5 H(+)(out). In terms of biological role, produces ATP from ADP in the presence of a proton gradient across the membrane. The catalytic sites are hosted primarily by the beta subunits. The protein is ATP synthase subunit beta of Corynebacterium glutamicum (strain R).